The chain runs to 261 residues: 3-methyl-2-oxobutanoate hydroxymethyltransferase (261 aa).

2 residues coordinate Mg(2+): Asp-42 and Asp-81. 3-methyl-2-oxobutanoate-binding positions include 42–43 (DS), Asp-81, and Lys-110. Glu-112 contacts Mg(2+). Glu-179 serves as the catalytic Proton acceptor.

This sequence belongs to the PanB family. As to quaternary structure, homodecamer; pentamer of dimers. Mg(2+) serves as cofactor.

The protein localises to the cytoplasm. It catalyses the reaction 3-methyl-2-oxobutanoate + (6R)-5,10-methylene-5,6,7,8-tetrahydrofolate + H2O = 2-dehydropantoate + (6S)-5,6,7,8-tetrahydrofolate. It functions in the pathway cofactor biosynthesis; (R)-pantothenate biosynthesis; (R)-pantoate from 3-methyl-2-oxobutanoate: step 1/2. Its function is as follows. Catalyzes the reversible reaction in which hydroxymethyl group from 5,10-methylenetetrahydrofolate is transferred onto alpha-ketoisovalerate to form ketopantoate. This Thermus thermophilus (strain ATCC 27634 / DSM 579 / HB8) protein is 3-methyl-2-oxobutanoate hydroxymethyltransferase.